The sequence spans 842 residues: Putative G-type lectin S-receptor-like serine/threonine-protein kinase At1g61610 (842 aa).

An N-terminal signal peptide occupies residues 1–22 (MAGFNRNLTLVTTLLIFHQLCS). N-linked (GlcNAc...) asparagine glycosylation is found at Asn7, Asn23, Asn35, Asn60, Asn110, Asn123, Asn304, Asn351, and Asn380. Residues 23–443 (NVSCSTSNSF…KLGGGKENST (421 aa)) lie on the Extracellular side of the membrane. In terms of domain architecture, Bulb-type lectin spans 29-150 (SNSFTRNHTI…SDRRKWYWES (122 aa)). The 40-residue stretch at 292–331 (PSTECEKYNRCGNYSVCDDSKEFDSGKCSCIDGFEPVHQD) folds into the EGF-like domain. Intrachain disulfides connect Cys296-Cys308 and Cys302-Cys319. The PAN domain maps to 350-431 (CNQSLVAGQE…GGNSINIRLA (82 aa)). 2 cysteine pairs are disulfide-bonded: Cys385–Cys406 and Cys389–Cys395. A glycan (N-linked (GlcNAc...) asparagine) is linked at Asn441. The helical transmembrane segment at 444 to 464 (LWIIVFSVIGAFLLGLCIWIL) threads the bilayer. Over 465–842 (WKFKKSLKAF…DVTFTTIVGR (378 aa)) the chain is Cytoplasmic. Residues 525–814 (FAEENKLGQG…PRQPTFHSFL (290 aa)) enclose the Protein kinase domain. Residues 531-539 (LGQGGFGTV) and Lys553 each bind ATP. Position 559 is a phosphoserine (Ser559). The segment at 614-631 (SKQGSLDWRKRWEVIGGI) is caM-binding. Asp650 acts as the Proton acceptor in catalysis. 2 positions are modified to phosphoserine: Ser654 and Ser667. Thr684 is modified (phosphothreonine). 2 positions are modified to phosphoserine: Ser728 and Ser830. Thr837 carries the phosphothreonine modification.

The protein belongs to the protein kinase superfamily. Ser/Thr protein kinase family.

It is found in the cell membrane. The enzyme catalyses L-seryl-[protein] + ATP = O-phospho-L-seryl-[protein] + ADP + H(+). The catalysed reaction is L-threonyl-[protein] + ATP = O-phospho-L-threonyl-[protein] + ADP + H(+). In Arabidopsis thaliana (Mouse-ear cress), this protein is Putative G-type lectin S-receptor-like serine/threonine-protein kinase At1g61610.